The primary structure comprises 681 residues: UvrABC system protein C (681 aa).

Positions 1–23 (MNGKKLPDGGILFDETDDEDDDA) are disordered. Acidic residues predominate over residues 14 to 23 (DETDDEDDDA). The GIY-YIG domain occupies 67–145 (NSPGVYRMFN…IKRLRPRFNV (79 aa)). The region spanning 255-290 (QAVKTAIARQMNEASEDLDFERAAIYRDRLAALSHV) is the UVR domain.

Belongs to the UvrC family. As to quaternary structure, interacts with UvrB in an incision complex.

It is found in the cytoplasm. In terms of biological role, the UvrABC repair system catalyzes the recognition and processing of DNA lesions. UvrC both incises the 5' and 3' sides of the lesion. The N-terminal half is responsible for the 3' incision and the C-terminal half is responsible for the 5' incision. This is UvrABC system protein C from Agrobacterium fabrum (strain C58 / ATCC 33970) (Agrobacterium tumefaciens (strain C58)).